The chain runs to 281 residues: Imidazole glycerol phosphate synthase subunit HisF (281 aa).

Catalysis depends on residues D12 and D131. A disordered region spans residues 256-281 (VRQAEPLPQPAREGLGDSARRAMSSG).

Belongs to the HisA/HisF family. Heterodimer of HisH and HisF.

It is found in the cytoplasm. It catalyses the reaction 5-[(5-phospho-1-deoxy-D-ribulos-1-ylimino)methylamino]-1-(5-phospho-beta-D-ribosyl)imidazole-4-carboxamide + L-glutamine = D-erythro-1-(imidazol-4-yl)glycerol 3-phosphate + 5-amino-1-(5-phospho-beta-D-ribosyl)imidazole-4-carboxamide + L-glutamate + H(+). It functions in the pathway amino-acid biosynthesis; L-histidine biosynthesis; L-histidine from 5-phospho-alpha-D-ribose 1-diphosphate: step 5/9. In terms of biological role, IGPS catalyzes the conversion of PRFAR and glutamine to IGP, AICAR and glutamate. The HisF subunit catalyzes the cyclization activity that produces IGP and AICAR from PRFAR using the ammonia provided by the HisH subunit. This is Imidazole glycerol phosphate synthase subunit HisF from Thermosynechococcus vestitus (strain NIES-2133 / IAM M-273 / BP-1).